Reading from the N-terminus, the 271-residue chain is Aminoglycoside 3'-phosphotransferase (271 aa).

The active-site Proton acceptor is the D198.

It belongs to the aminoglycoside phosphotransferase family.

It carries out the reaction kanamycin A + ATP = kanamycin 3'-phosphate + ADP + H(+). In terms of biological role, resistance to kanamycin and structurally-related aminoglycosides, including amikacin. This chain is Aminoglycoside 3'-phosphotransferase, found in Salmonella typhimurium.